The primary structure comprises 511 residues: uncharacterized protein (511 aa).

A run of 14 helical transmembrane segments spans residues 7–27, 46–66, 80–100, 107–127, 134–154, 163–183, 200–220, 226–246, 266–286, 301–321, 329–349, 357–377, 394–414, and 437–457; these read WVIS…NTAL, VNPI…GPLL, LPVF…ALMA, GAAT…SFPI, LLVL…LGTI, WLFF…YFFL, AGIL…IFLQ, SGYV…LLIV, VLGL…LSAF, LILL…LSAL, GMLG…WLHI, MFAA…AAGL, TAVQ…IGFF, and LFFI…CMNA. Positions 465-486 are disordered; that stretch reads AHKPHDKAKTAPEKPAVSAQGL.

It belongs to the major facilitator superfamily.

It localises to the cell membrane. This is an uncharacterized protein from Bacillus subtilis (strain 168).